Here is a 272-residue protein sequence, read N- to C-terminus: HMP-PP phosphatase (272 aa).

The Nucleophile role is filled by Asp8. Residues Asp8, Asp10, and Asp212 each coordinate Mg(2+).

Belongs to the HAD-like hydrolase superfamily. Cof family. Mg(2+) serves as cofactor.

It catalyses the reaction 4-amino-2-methyl-5-(diphosphooxymethyl)pyrimidine + H2O = 4-amino-2-methyl-5-(phosphooxymethyl)pyrimidine + phosphate + H(+). Catalyzes the hydrolysis of 4-amino-2-methyl-5-hydroxymethylpyrimidine pyrophosphate (HMP-PP) to 4-amino-2-methyl-5-hydroxymethylpyrimidine phosphate (HMP-P). The chain is HMP-PP phosphatase from Escherichia coli (strain 55989 / EAEC).